An 801-amino-acid polypeptide reads, in one-letter code: MSLLHIAVILPLIFALIIPILYRFFKRIHLGWFVLPVPIVIFIYMLTLIKTTMSGNTVMKTLNWMPHFGMNFDLYLDGLGLLFSLLISGIGSLVVLYSIGYLSKSEQLGNFYCYLLLFMGAMLGVVLSDNVIILYLFWELTSFSSFLLISFWRERQASIYGAQKSLIITVFGGLSLLGGIILLAIPTQSFSIQYMIQHASEIQNSPFFIFAMILIMIGAFTKSAQFPFYIWLPDAMEAPTPVSAYLHSATMVKAGLYLIARMTPIFAASQGWVWTVTLVGLITLFWASLNATKQQDLKGILAFSTVSQLGMIMAMLGIGAISYHYQGDDSKIYAAAFTAAIFHLINHATFKGALFMITGAVDHSTGTRDVKKLGGLLTIMPISFTITVITALSMAGVPPFNGFLSKESFLETTFTASQANLFSVDTLGYLFPIIGIVGSVFTFVYSIKFIMHIFFGQYKPEQLPKKAHEVSILMLLSPAILATLVIVFGLFPGILTNSIIEPATSSINHTVIDDVEFHMFHGLTPAFLSTLVIYILGILLIVTFSYWVKLLQRQPGKLTFNYWYNRSANVIPNYSEKMTNSYVTDYSRNNLVIIFGALILLTFVTIFSVPFNINFKDVSPIRIFEVCIVILLLSAAFLILFAKSRLFSIIMLSAVGYAVSVLFIFFKAPDLALTQFVVESISTALFLLCFYHLPNLNRYNEKRSFQLTNALIAGGVGLSVIIIGLIAYGNRHFESISKFYQEHVYDLAHGKNMVNVILVDFRGMDTLFESSVLGIAGLAVYTMIKLRKKRQTQGNEVKNHE.

21 helical membrane-spanning segments follow: residues 4–25 (LHIA…YRFF), 30–49 (LGWF…LTLI), 79–101 (LGLL…SIGY), 108–127 (LGNF…GVVL), 131–153 (VIIL…SFWR), 166–188 (LIIT…IPTQ), 208–230 (FIFA…PFYI), 243–265 (SAYL…MTPI), 270–289 (QGWV…WASL), 302–324 (AFST…ISYH), 339–361 (AAIF…TGAV), 373–395 (LGGL…LSMA), 429–451 (YLFP…KFIM), 472–494 (ILML…FPGI), 526–548 (AFLS…SYWV), 589–611 (NNLV…SVPF), 621–641 (IRIF…LILF), 646–668 (LFSI…FFKA), 672–694 (ALTQ…YHLP), 707–729 (LTNA…IAYG), and 767–784 (LFES…YTMI).

This sequence belongs to the CPA3 antiporters (TC 2.A.63) subunit A family. As to quaternary structure, may form a heterooligomeric complex that consists of seven subunits: mnhA1, mnhB1, mnhC1, mnhD1, mnhE1, mnhF1 and mnhG1.

The protein localises to the cell membrane. Na(+) extrusion is completely inhibited by the H(+) conductor carbonyl cyanide m-chlorophenylhydrazone (CCCP). Functionally, mnh complex is a Na(+)/H(+) antiporter involved in Na(+) excretion. This Staphylococcus aureus (strain MSSA476) protein is Na(+)/H(+) antiporter subunit A1 (mnhA1).